Consider the following 99-residue polypeptide: MASKRIIRMSDLLHTTPVFNRGYRFQWEQAQQSYVILYPEGLVRLNESATLILKQIDGKLTVHDIIQNLSAQFPDATGLDQDIVEFLKQAESRQWICLQ.

Belongs to the PqqD family. In terms of assembly, monomer. Interacts with PqqE.

Its pathway is cofactor biosynthesis; pyrroloquinoline quinone biosynthesis. Its function is as follows. Functions as a PqqA binding protein and presents PqqA to PqqE, in the pyrroloquinoline quinone (PQQ) biosynthetic pathway. The sequence is that of PqqA binding protein from Acinetobacter baylyi (strain ATCC 33305 / BD413 / ADP1).